A 124-amino-acid chain; its full sequence is Small ribosomal subunit protein uS12 (124 aa).

At Asp89 the chain carries 3-methylthioaspartic acid.

Belongs to the universal ribosomal protein uS12 family. In terms of assembly, part of the 30S ribosomal subunit. Contacts proteins S8 and S17. May interact with IF1 in the 30S initiation complex.

Functionally, with S4 and S5 plays an important role in translational accuracy. In terms of biological role, interacts with and stabilizes bases of the 16S rRNA that are involved in tRNA selection in the A site and with the mRNA backbone. Located at the interface of the 30S and 50S subunits, it traverses the body of the 30S subunit contacting proteins on the other side and probably holding the rRNA structure together. The combined cluster of proteins S8, S12 and S17 appears to hold together the shoulder and platform of the 30S subunit. This is Small ribosomal subunit protein uS12 from Shewanella frigidimarina (strain NCIMB 400).